The chain runs to 259 residues: NAD(P)H-quinone oxidoreductase subunit K 2 (259 aa).

[4Fe-4S] cluster contacts are provided by Cys-52, Cys-53, Cys-117, and Cys-148.

Belongs to the complex I 20 kDa subunit family. NDH-1 can be composed of about 15 different subunits; different subcomplexes with different compositions have been identified which probably have different functions. Requires [4Fe-4S] cluster as cofactor.

Its subcellular location is the cellular thylakoid membrane. It catalyses the reaction a plastoquinone + NADH + (n+1) H(+)(in) = a plastoquinol + NAD(+) + n H(+)(out). The catalysed reaction is a plastoquinone + NADPH + (n+1) H(+)(in) = a plastoquinol + NADP(+) + n H(+)(out). In terms of biological role, NDH-1 shuttles electrons from an unknown electron donor, via FMN and iron-sulfur (Fe-S) centers, to quinones in the respiratory and/or the photosynthetic chain. The immediate electron acceptor for the enzyme in this species is believed to be plastoquinone. Couples the redox reaction to proton translocation, and thus conserves the redox energy in a proton gradient. Cyanobacterial NDH-1 also plays a role in inorganic carbon-concentration. This is NAD(P)H-quinone oxidoreductase subunit K 2 (ndhK2) from Cyanothece sp. (strain PCC 7425 / ATCC 29141).